The primary structure comprises 828 residues: Periplasmic nitrate reductase (828 aa).

Positions 1-33 form a signal peptide, tat-type signal; that stretch reads MKLSRRDFMKANAAVAAAAAAGLTIPTVVQAAA. The 4Fe-4S Mo/W bis-MGD-type domain occupies 39–95; the sequence is IKWDKAPCRFCGTGCGVLVGTQNGRIVASQGDPEAAVNRGLSCIKGYFLPKIMYGKD. 4 residues coordinate [4Fe-4S] cluster: cysteine 46, cysteine 49, cysteine 53, and cysteine 81. Mo-bis(molybdopterin guanine dinucleotide) is bound by residues lysine 83, glutamine 150, asparagine 175, cysteine 179, 212–219, 243–247, 262–264, methionine 372, glutamine 376, asparagine 482, 508–509, lysine 531, aspartate 558, and 718–727; these read WGSNMAEM, STFEH, QTD, SD, and TGRVLEHWHT. Phenylalanine 794 provides a ligand contact to substrate. Positions 802 and 819 each coordinate Mo-bis(molybdopterin guanine dinucleotide).

It belongs to the prokaryotic molybdopterin-containing oxidoreductase family. NasA/NapA/NarB subfamily. In terms of assembly, component of the periplasmic nitrate reductase NapAB complex composed of NapA and NapB. It depends on [4Fe-4S] cluster as a cofactor. Mo-bis(molybdopterin guanine dinucleotide) is required as a cofactor. Predicted to be exported by the Tat system. The position of the signal peptide cleavage has not been experimentally proven.

It is found in the periplasm. The enzyme catalyses 2 Fe(II)-[cytochrome] + nitrate + 2 H(+) = 2 Fe(III)-[cytochrome] + nitrite + H2O. In terms of biological role, catalytic subunit of the periplasmic nitrate reductase complex NapAB. Receives electrons from NapB and catalyzes the reduction of nitrate to nitrite. In Serratia proteamaculans (strain 568), this protein is Periplasmic nitrate reductase.